Consider the following 26-residue polypeptide: Acyl carrier protein (26 aa).

Residues 2–26 (SDIEQRIKQAVAEQLGMRAEEIKNE) enclose the Carrier domain.

Belongs to the acyl carrier protein (ACP) family. Post-translationally, 4'-phosphopantetheine is transferred from CoA to a specific serine of apo-ACP by AcpS. This modification is essential for activity because fatty acids are bound in thioester linkage to the sulfhydryl of the prosthetic group.

It localises to the cytoplasm. The protein operates within lipid metabolism; fatty acid biosynthesis. Its function is as follows. Carrier of the growing fatty acid chain in fatty acid biosynthesis. The protein is Acyl carrier protein (acpP) of Acinetobacter calcoaceticus.